A 566-amino-acid polypeptide reads, in one-letter code: NAD-dependent malic enzyme 3 (566 aa).

The active-site Proton donor is the Tyr105. Lys178 functions as the Proton acceptor in the catalytic mechanism. Glu249, Asp250, and Asp273 together coordinate a divalent metal cation. NAD(+)-binding positions include 306–309 (AGTA), Asn423, and Asn468.

It belongs to the malic enzymes family. The cofactor is Mg(2+). Mn(2+) is required as a cofactor.

It catalyses the reaction (S)-malate + NAD(+) = pyruvate + CO2 + NADH. The catalysed reaction is oxaloacetate + H(+) = pyruvate + CO2. Catalyzes the decarboxylation of malate to pyruvate. Can use NAD and NADP, but with a strong preference for NAD. Can also catalyze the decarboxylation of oxaloacetate. Involved in keeping the ATP levels high. The chain is NAD-dependent malic enzyme 3 (malS) from Bacillus subtilis (strain 168).